A 139-amino-acid polypeptide reads, in one-letter code: uncharacterized protein (139 aa).

This is an uncharacterized protein from Halalkalibacterium halodurans (strain ATCC BAA-125 / DSM 18197 / FERM 7344 / JCM 9153 / C-125) (Bacillus halodurans).